Here is a 258-residue protein sequence, read N- to C-terminus: Snake venom serine protease KN13 (258 aa).

The signal sequence occupies residues 1–18; that stretch reads MVLIRVLANLLILQLSYA. Residues 19–24 constitute a propeptide that is removed on maturation; sequence QRSSEL. The region spanning 25-249 is the Peptidase S1 domain; it reads VIGGDECNIN…HLDWIQNIIA (225 aa). 6 disulfide bridges follow: Cys31–Cys163, Cys50–Cys66, Cys98–Cys256, Cys142–Cys210, Cys174–Cys189, and Cys200–Cys225. Catalysis depends on His65, which acts as the Charge relay system. Asn103 carries N-linked (GlcNAc...) asparagine glycosylation. Residue Asp110 is the Charge relay system of the active site. N-linked (GlcNAc...) asparagine glycosylation is found at Asn121, Asn122, Asn154, and Asn170. Ser204 (charge relay system) is an active-site residue. Asn251 carries an N-linked (GlcNAc...) asparagine glycan.

The protein belongs to the peptidase S1 family. Snake venom subfamily. Monomer. Expressed by the venom gland.

The protein localises to the secreted. Its function is as follows. Snake venom serine protease that may act in the hemostasis system of the prey. This Trimeresurus stejnegeri (Chinese green tree viper) protein is Snake venom serine protease KN13.